The chain runs to 306 residues: sn-1-specific diacylglycerol lipase ABHD11 (306 aa).

The interval 19-40 (GPSFARVPVAPSSSSGGRGGAE) is disordered. Residues 23 to 33 (ARVPVAPSSSS) show a composition bias toward low complexity. The residue at position 78 (K78) is an N6-succinyllysine. Catalysis depends on charge relay system residues S132, D228, and H287.

This sequence belongs to the AB hydrolase superfamily. In terms of assembly, interacts with OGDH and DLST; this interaction maintains the functional lipoylation of the 2-oxoglutarate dehydrogenase complex. Post-translationally, phosphorylated. Ubiquitously expressed. Highly expressed in small intestine, prostate and thyroid, while aorta and colon tissues exhibit weak expression levels.

Its subcellular location is the mitochondrion. It is found in the mitochondrion matrix. The enzyme catalyses 1-octadecanoyl-2-(5Z,8Z,11Z,14Z-eicosatetraenoyl)-sn-glycerol + H2O = 2-(5Z,8Z,11Z,14Z-eicosatetraenoyl)-glycerol + octadecanoate + H(+). It carries out the reaction a 1,2-diacyl-sn-glycerol + H2O = a 2-acylglycerol + a fatty acid + H(+). It catalyses the reaction a 1,3-diacyl-sn-glycerol + H2O = a 1-acyl-sn-glycerol + a fatty acid + H(+). The catalysed reaction is 1-octadecanoyl-2-(9Z-octadecenoyl)-sn-glycerol + H2O = 2-(9Z-octadecenoyl)-glycerol + octadecanoate + H(+). The enzyme catalyses 1-octadecanoyl-2-(4Z,7Z,10Z,13Z,16Z,19Z-docosahexaenoyl)-sn-glycerol + H2O = 2-(4Z,7Z,10Z,13Z,16Z,19Z-docosahexaenoyl)-glycerol + octadecanoate + H(+). It carries out the reaction 1,2-didecanoylglycerol + H2O = decanoylglycerol + decanoate + H(+). Catalyzes the hydrolysis of diacylglycerol in vitro and may function as a key regulator in lipid metabolism, namely by regulating the intracellular levels of diacylglycerol. 1,2-diacyl-sn-glycerols are the preferred substrate over 1,3-diacyl-sn-glycerols. The enzyme hydrolyzes stearate in preference to palmitate from the sn-1 position of 1,2-diacyl-sn-glycerols. Maintains the functional lipoylation of the 2-oxoglutarate dehydrogenase complex (OGDHc) through its interaction with the OGDHc by preventing the formation of lipoyl adducts. In addition, is also required for the expansion and differentiation of embryonic stem cells (ESCs). The sequence is that of sn-1-specific diacylglycerol lipase ABHD11 from Homo sapiens (Human).